We begin with the raw amino-acid sequence, 236 residues long: Exosome complex component Rrp4 (236 aa).

The S1 motif domain maps to 64–133 (GDKVIGKIIE…EIKESWLTLK (70 aa)). The region spanning 141-199 (EGGHMVLIHASRVPRVIGKGGGMVNMVKELTSTRIIIGQNGLIWIDGPIEGVTMAIAAI) is the KH domain.

The protein belongs to the RRP4 family. In terms of assembly, component of the archaeal exosome complex. Forms a trimer of Rrp4 and/or Csl4 subunits. The trimer associates with a hexameric ring-like arrangement composed of 3 Rrp41-Rrp42 heterodimers.

It localises to the cytoplasm. Non-catalytic component of the exosome, which is a complex involved in RNA degradation. Increases the RNA binding and the efficiency of RNA degradation. Confers strong poly(A) specificity to the exosome. The polypeptide is Exosome complex component Rrp4 (Thermoplasma volcanium (strain ATCC 51530 / DSM 4299 / JCM 9571 / NBRC 15438 / GSS1)).